The sequence spans 273 residues: Large ribosomal subunit protein uL2cz/uL2cy (273 aa).

Disordered regions lie at residues 1 to 23 and 223 to 273; these read MAIH…SQVK and NPVD…RRSK.

Belongs to the universal ribosomal protein uL2 family. As to quaternary structure, part of the 50S ribosomal subunit.

The protein resides in the plastid. Its subcellular location is the chloroplast. The polypeptide is Large ribosomal subunit protein uL2cz/uL2cy (rpl2-A) (Oenothera argillicola (Appalachian evening primrose)).